A 370-amino-acid chain; its full sequence is D-alanine--D-alanine ligase (370 aa).

Residues 144-352 (KKIFADAGIP…YGALIERLVD (209 aa)) enclose the ATP-grasp domain. 177–232 (EEVLTYPVFVKPANLGSSVGISKATNKKELADAMTEAFLYDRRVVVEQGVVAREIE) provides a ligand contact to ATP. Mg(2+) is bound by residues Asp-306, Glu-319, and Asn-321.

This sequence belongs to the D-alanine--D-alanine ligase family. The cofactor is Mg(2+). It depends on Mn(2+) as a cofactor.

It localises to the cytoplasm. It catalyses the reaction 2 D-alanine + ATP = D-alanyl-D-alanine + ADP + phosphate + H(+). Its pathway is cell wall biogenesis; peptidoglycan biosynthesis. Functionally, cell wall formation. This chain is D-alanine--D-alanine ligase, found in Listeria monocytogenes serotype 4b (strain F2365).